Here is a 170-residue protein sequence, read N- to C-terminus: NAD(P)H-quinone oxidoreductase subunit I, chloroplastic (170 aa).

4Fe-4S ferredoxin-type domains lie at 55-84 (GRIH…VDWK) and 95-124 (LNYS…MTEE). 8 residues coordinate [4Fe-4S] cluster: Cys64, Cys67, Cys70, Cys74, Cys104, Cys107, Cys110, and Cys114.

This sequence belongs to the complex I 23 kDa subunit family. As to quaternary structure, NDH is composed of at least 16 different subunits, 5 of which are encoded in the nucleus. The cofactor is [4Fe-4S] cluster.

It is found in the plastid. Its subcellular location is the chloroplast thylakoid membrane. It carries out the reaction a plastoquinone + NADH + (n+1) H(+)(in) = a plastoquinol + NAD(+) + n H(+)(out). It catalyses the reaction a plastoquinone + NADPH + (n+1) H(+)(in) = a plastoquinol + NADP(+) + n H(+)(out). In terms of biological role, NDH shuttles electrons from NAD(P)H:plastoquinone, via FMN and iron-sulfur (Fe-S) centers, to quinones in the photosynthetic chain and possibly in a chloroplast respiratory chain. The immediate electron acceptor for the enzyme in this species is believed to be plastoquinone. Couples the redox reaction to proton translocation, and thus conserves the redox energy in a proton gradient. The polypeptide is NAD(P)H-quinone oxidoreductase subunit I, chloroplastic (Spinacia oleracea (Spinach)).